The primary structure comprises 152 residues: Proteolipid protein 2 (152 aa).

An MARVEL domain is found at 19–137; that stretch reads FSRTRKGFLL…DAYITFPLRQ (119 aa). Transmembrane regions (helical) follow at residues 25 to 45, 48 to 68, and 85 to 105; these read GFLL…FSTS, GYSF…VVYM, and FFRT…VLVE. Residue N108 is glycosylated (N-linked (GlcNAc...) asparagine). Residues 112-132 form a helical membrane-spanning segment; the sequence is IAAGALGLCAAGLFGYDAYIT.

The protein resides in the membrane. Functionally, may play a role in cell differentiation in the intestinal epithelium. The protein is Proteolipid protein 2 (PLP2) of Bos taurus (Bovine).